An 887-amino-acid polypeptide reads, in one-letter code: Inter-alpha-trypsin inhibitor heavy chain H3 (887 aa).

Positions 1 to 21 are cleaved as a signal peptide; it reads MVTLWWPCLVLALLSGLETSG. Residues 22–33 constitute a propeptide that is removed on maturation; sequence FPRSPLRLLGKR. The 130-residue stretch at 29 to 158 folds into the VIT domain; sequence LLGKRSLPEG…KVIFELTYEE (130 aa). N-linked (GlcNAc...) asparagine glycosylation occurs at N91. In terms of domain architecture, VWFA spans 282-442; that stretch reads PKNIAFVIDV…YNFLESLALE (161 aa). N-linked (GlcNAc...) asparagine glycosylation is present at N580. An Aspartate 1-(chondroitin 4-sulfate)-ester modification is found at D647. Positions 648–887 are excised as a propeptide; that stretch reads PHFIIQVPGK…HTDYIVPSLF (240 aa).

Belongs to the ITIH family. I-alpha-I plasma protease inhibitors are assembled from one or two heavy chains (HC) and one light chain, bikunin. Pre-alpha-inhibitor (P-alpha-I) is composed of ITIH3/HC3 and bikunin. In terms of processing, heavy chains are linked to bikunin via chondroitin 4-sulfate esterified to the alpha-carboxyl of the C-terminal aspartate after propeptide cleavage.

It localises to the secreted. Its function is as follows. May act as a carrier of hyaluronan in serum or as a binding protein between hyaluronan and other matrix protein, including those on cell surfaces in tissues to regulate the localization, synthesis and degradation of hyaluronan which are essential to cells undergoing biological processes. In Rattus norvegicus (Rat), this protein is Inter-alpha-trypsin inhibitor heavy chain H3 (Itih3).